The chain runs to 216 residues: Orotate phosphoribosyltransferase (216 aa).

Lysine 30 serves as a coordination point for 5-phospho-alpha-D-ribose 1-diphosphate. Orotate is bound at residue 38 to 39 (FF). 5-phospho-alpha-D-ribose 1-diphosphate is bound by residues 75 to 76 (YK), arginine 102, lysine 103, lysine 106, histidine 108, and 128 to 136 (DDVITAGTA). Threonine 132 and arginine 160 together coordinate orotate.

Belongs to the purine/pyrimidine phosphoribosyltransferase family. PyrE subfamily. In terms of assembly, homodimer. Mg(2+) serves as cofactor.

It carries out the reaction orotidine 5'-phosphate + diphosphate = orotate + 5-phospho-alpha-D-ribose 1-diphosphate. It participates in pyrimidine metabolism; UMP biosynthesis via de novo pathway; UMP from orotate: step 1/2. Its function is as follows. Catalyzes the transfer of a ribosyl phosphate group from 5-phosphoribose 1-diphosphate to orotate, leading to the formation of orotidine monophosphate (OMP). In Acinetobacter baumannii (strain ATCC 17978 / DSM 105126 / CIP 53.77 / LMG 1025 / NCDC KC755 / 5377), this protein is Orotate phosphoribosyltransferase.